We begin with the raw amino-acid sequence, 612 residues long: Chaperone protein DnaK (612 aa).

A Phosphothreonine; by autocatalysis modification is found at T173. Residues 576-612 are disordered; sequence AAKAQQAEGGANAEGKKADDNVVDAEYEEVKDDETKK. The span at 578–588 shows a compositional bias: low complexity; the sequence is KAQQAEGGANA. The span at 596–612 shows a compositional bias: acidic residues; that stretch reads NVVDAEYEEVKDDETKK.

Belongs to the heat shock protein 70 family.

Its function is as follows. Acts as a chaperone. In Bacillus velezensis (strain DSM 23117 / BGSC 10A6 / LMG 26770 / FZB42) (Bacillus amyloliquefaciens subsp. plantarum), this protein is Chaperone protein DnaK.